We begin with the raw amino-acid sequence, 133 residues long: Holo-[acyl-carrier-protein] synthase (133 aa).

Positions 8 and 57 each coordinate Mg(2+).

Belongs to the P-Pant transferase superfamily. AcpS family. It depends on Mg(2+) as a cofactor.

It localises to the cytoplasm. The enzyme catalyses apo-[ACP] + CoA = holo-[ACP] + adenosine 3',5'-bisphosphate + H(+). Functionally, transfers the 4'-phosphopantetheine moiety from coenzyme A to a Ser of acyl-carrier-protein. This is Holo-[acyl-carrier-protein] synthase from Caulobacter sp. (strain K31).